The sequence spans 215 residues: Peroxiredoxin (215 aa).

In terms of domain architecture, Thioredoxin spans 3-158 (PLLGDNFPEI…ILRAVKALQV (156 aa)). The active-site Cysteine sulfenic acid (-SOH) intermediate is cysteine 45. Substrate is bound at residue arginine 121. Cysteines 205 and 211 form a disulfide.

This sequence belongs to the peroxiredoxin family. Prx6 subfamily. In terms of assembly, homodecamer. Pentamer of dimers that assemble into a ring structure.

The protein resides in the cytoplasm. The catalysed reaction is a hydroperoxide + [thioredoxin]-dithiol = an alcohol + [thioredoxin]-disulfide + H2O. In terms of biological role, thiol-specific peroxidase that catalyzes the reduction of hydrogen peroxide and organic hydroperoxides to water and alcohols, respectively. Plays a role in cell protection against oxidative stress by detoxifying peroxides. In Archaeoglobus fulgidus (strain ATCC 49558 / DSM 4304 / JCM 9628 / NBRC 100126 / VC-16), this protein is Peroxiredoxin.